The following is a 608-amino-acid chain: ATP-citrate synthase beta chain protein 2 (608 aa).

ATP-binding positions include 214-234 and 265-291; these read ILRF…ELGG and FKSE…KNQA. Glu231 lines the Mg(2+) pocket. The active-site Tele-phosphohistidine intermediate is His273. 292–302 is a CoA binding site; sequence LIDAGAIVPTS.

The protein belongs to the succinate/malate CoA ligase alpha subunit family. Heterooctamer of 4 alpha and 4 beta chains. Expressed in trichomes, epidermal leaf cells, anther tapetal cells, stigma and in young vascular bundles of expanding leaves, cotyledons, roots, pedicel of flowers and siliques.

It localises to the cytoplasm. It is found in the cytosol. It catalyses the reaction oxaloacetate + acetyl-CoA + ADP + phosphate = citrate + ATP + CoA. ATP citrate-lyase is the primary enzyme responsible for the synthesis of cytosolic acetyl-CoA, used for the elongation of fatty acids and biosynthesis of isoprenoids, flavonoids and malonated derivatives. May supply substrate to the cytosolic acetyl-CoA carboxylase, which generates the malonyl-CoA used for the synthesis of a multitude of compounds, including very long chain fatty acids and flavonoids. Required for normal growth and development and elongation of C18 fatty acids to C20 to C24 fatty acids in seeds. n contrast to all known animal ACL enzymes having a homomeric structure, plant ACLs are composed of alpha and beta chains. This Arabidopsis thaliana (Mouse-ear cress) protein is ATP-citrate synthase beta chain protein 2.